Consider the following 239-residue polypeptide: Ribonuclease PH (239 aa).

Phosphate-binding positions include Arg86 and 124–126 (GTR).

It belongs to the RNase PH family. Homohexameric ring arranged as a trimer of dimers.

The catalysed reaction is tRNA(n+1) + phosphate = tRNA(n) + a ribonucleoside 5'-diphosphate. Its function is as follows. Phosphorolytic 3'-5' exoribonuclease that plays an important role in tRNA 3'-end maturation. Removes nucleotide residues following the 3'-CCA terminus of tRNAs; can also add nucleotides to the ends of RNA molecules by using nucleoside diphosphates as substrates, but this may not be physiologically important. Probably plays a role in initiation of 16S rRNA degradation (leading to ribosome degradation) during starvation. The protein is Ribonuclease PH of Rhizobium leguminosarum bv. trifolii (strain WSM2304).